Here is a 59-residue protein sequence, read N- to C-terminus: Small, acid-soluble spore protein H 2 (59 aa).

Belongs to the SspH family.

The protein localises to the spore core. The protein is Small, acid-soluble spore protein H 2 of Geobacillus kaustophilus (strain HTA426).